Consider the following 441-residue polypeptide: MSAREVNFDGLPGLTHHYAGLSFGNEASARHQHQVSNPKLAALQGLKKMKTLADLGYAQGVIPPHERPNIEALRQLGFSGSDAQVLAQAAKQAPKLLSAVSSASAMWVANAATVSPSVDSRDGRVHLTVANLNNKYHRSIEAPTTAALLRAIFRDDEHFSVHDALPQVALFGDEGAANHNRFSNGYGEPGVQLFVYGCAQAGGIRPLHYPARQTREASEAVARLNQLDAARTLYAQQDPVVIDAGVFHNDVIAVSNQQTLFCHQRAFLNQPQLMARLAQKVPGFNLIEVPDERVSVADAVATYLFNSQLLSKDNGKMLLILPEEARRHAGVWRWLTEMVAGDGTIDELKVLDLRESMCNGGGPACLRLRVVLNAQQQAAVNPAVMMNETLYATLCGWVERHYRDRLSQADLADPQLLSEGREALDELTKLLDLGHVYRFQQ.

Residues 19–28 (AGLSFGNEAS), N110, and 137–138 (HR) each bind substrate. E174 is a catalytic residue. Substrate is bound at residue R212. Residue H248 is part of the active site. Positions 250 and 359 each coordinate substrate. C365 serves as the catalytic Nucleophile.

This sequence belongs to the succinylarginine dihydrolase family. In terms of assembly, homodimer.

It catalyses the reaction N(2)-succinyl-L-arginine + 2 H2O + 2 H(+) = N(2)-succinyl-L-ornithine + 2 NH4(+) + CO2. It participates in amino-acid degradation; L-arginine degradation via AST pathway; L-glutamate and succinate from L-arginine: step 2/5. In terms of biological role, catalyzes the hydrolysis of N(2)-succinylarginine into N(2)-succinylornithine, ammonia and CO(2). The sequence is that of N-succinylarginine dihydrolase from Erwinia tasmaniensis (strain DSM 17950 / CFBP 7177 / CIP 109463 / NCPPB 4357 / Et1/99).